The sequence spans 382 residues: Alanine racemase 1 (382 aa).

The Proton acceptor; specific for D-alanine role is filled by Lys39. Lys39 bears the N6-(pyridoxal phosphate)lysine mark. Arg138 contributes to the substrate binding site. Tyr265 (proton acceptor; specific for L-alanine) is an active-site residue. Position 312 (Met312) interacts with substrate.

The protein belongs to the alanine racemase family. It depends on pyridoxal 5'-phosphate as a cofactor.

It carries out the reaction L-alanine = D-alanine. The protein operates within amino-acid biosynthesis; D-alanine biosynthesis; D-alanine from L-alanine: step 1/1. In terms of biological role, catalyzes the interconversion of L-alanine and D-alanine. May also act on other amino acids. This is Alanine racemase 1 (alr1) from Staphylococcus aureus (strain N315).